Reading from the N-terminus, the 336-residue chain is GTPase Obg (336 aa).

Residues 1–159 (MKFVDEATLI…KTLKLELKLL (159 aa)) enclose the Obg domain. Positions 160 to 329 (ADVGLVGLPN…LIEAIFAQLR (170 aa)) constitute an OBG-type G domain. GTP contacts are provided by residues 166–173 (GLPNAGKS), 191–195 (FTTLA), 213–216 (DIPG), 283–286 (NKMD), and 310–312 (SAI). Ser-173 and Thr-193 together coordinate Mg(2+).

It belongs to the TRAFAC class OBG-HflX-like GTPase superfamily. OBG GTPase family. As to quaternary structure, monomer. Requires Mg(2+) as cofactor.

It is found in the cytoplasm. In terms of biological role, an essential GTPase which binds GTP, GDP and possibly (p)ppGpp with moderate affinity, with high nucleotide exchange rates and a fairly low GTP hydrolysis rate. Plays a role in control of the cell cycle, stress response, ribosome biogenesis and in those bacteria that undergo differentiation, in morphogenesis control. This chain is GTPase Obg, found in Desulfatibacillum aliphaticivorans.